A 108-amino-acid polypeptide reads, in one-letter code: Movement protein TGB2 (108 aa).

Residues 1 to 8 (MPLTPPPD) are Cytoplasmic-facing. A helical membrane pass occupies residues 9–29 (YTKPFIAVVVGGTLAAFVLLL). Over 30-71 (TRNTLPHTGDNLHSLPHGGTYCDGTKRIRYGGPHRSHVPELP) the chain is Lumenal. The chain crosses the membrane as a helical span at residues 72–92 (AKSWALITVVAILIALHFSCL). The Cytoplasmic segment spans residues 93–108 (RTHRVHRCVLCHTTSG).

This sequence belongs to the Tymovirales TGBp2 protein family.

The protein resides in the host endoplasmic reticulum membrane. Plays a role in viral cell-to-cell propagation, by facilitating genome transport to neighboring plant cells through plasmosdesmata,. This chain is Movement protein TGB2, found in Lily virus X.